The primary structure comprises 391 residues: Casein kinase II subunit alpha (391 aa).

The interval 36 to 41 (QDDYQL) is interaction with beta subunit. Positions 39–324 (YQLVRKLGRG…AREAMEHPYF (286 aa)) constitute a Protein kinase domain. Residues 45-53 (LGRGKYSEV) and Lys-68 contribute to the ATP site. Asp-156 serves as the catalytic Proton acceptor. Phosphothreonine; by CDK1 occurs at positions 344 and 360. Phosphoserine; by CDK1 occurs at positions 362 and 370.

Belongs to the protein kinase superfamily. Ser/Thr protein kinase family. CK2 subfamily. Heterotetramer composed of two catalytic subunits (alpha chain and/or alpha' chain) and two regulatory subunits (beta chains). The tetramer can exist as a combination of 2 alpha/2 beta, 2 alpha'/2 beta or 1 alpha/1 alpha'/2 beta subunits. Also part of a CK2-SPT16-SSRP1 complex composed of SSRP1, SUPT16H, CSNK2A1, CSNK2A2 and CSNK2B, which forms following UV irradiation. Interacts with RNPS1. Interacts with SNAI1. Interacts with PML. Interacts with CCAR2. Interacts with HIRIP3. In terms of processing, phosphorylated at Thr-344, Thr-360, Ser-362 and Ser-370 by CDK1 in prophase and metaphase and dephosphorylated during anaphase. Phosphorylation does not directly affect casein kinase 2 activity, but may contribute to its regulation by forming binding sites for interacting proteins and/or targeting it to different compartments.

Its subcellular location is the nucleus. The enzyme catalyses L-seryl-[protein] + ATP = O-phospho-L-seryl-[protein] + ADP + H(+). It catalyses the reaction L-threonyl-[protein] + ATP = O-phospho-L-threonyl-[protein] + ADP + H(+). With respect to regulation, constitutively active protein kinase whose activity is not directly affected by phosphorylation. Seems to be regulated by level of expression and localization. Functionally, catalytic subunit of a constitutively active serine/threonine-protein kinase complex that phosphorylates a large number of substrates containing acidic residues C-terminal to the phosphorylated serine or threonine. Regulates numerous cellular processes, such as cell cycle progression, apoptosis and transcription, as well as viral infection. May act as a regulatory node which integrates and coordinates numerous signals leading to an appropriate cellular response. During mitosis, functions as a component of the p53/TP53-dependent spindle assembly checkpoint (SAC) that maintains cyclin-B-CDK1 activity and G2 arrest in response to spindle damage. Also required for p53/TP53-mediated apoptosis, phosphorylating 'Ser-392' of p53/TP53 following UV irradiation. Phosphorylates a number of DNA repair proteins in response to DNA damage, such as MDC1, MRE11, RAD9A, RAD51 and HTATSF1, promoting their recruitment to DNA damage sites. Can also negatively regulate apoptosis. Phosphorylates the caspases CASP9 and CASP2 and the apoptotic regulator NOL3. Phosphorylation protects CASP9 from cleavage and activation by CASP8, and inhibits the dimerization of CASP2 and activation of CASP8. Phosphorylates YY1, protecting YY1 from cleavage by CASP7 during apoptosis. Regulates transcription by direct phosphorylation of RNA polymerases I, II, III and IV. Also phosphorylates and regulates numerous transcription factors including NF-kappa-B, STAT1, CREB1, IRF1, IRF2, ATF1, ATF4, SRF, MAX, JUN, FOS, MYC and MYB. Phosphorylates Hsp90 and its co-chaperones FKBP4 and CDC37, which is essential for chaperone function. Mediates sequential phosphorylation of FNIP1, promoting its gradual interaction with Hsp90, leading to activate both kinase and non-kinase client proteins of Hsp90. Regulates Wnt signaling by phosphorylating CTNNB1 and the transcription factor LEF1. Acts as an ectokinase that phosphorylates several extracellular proteins. Phosphorylates PML at 'Ser-565' and primes it for ubiquitin-mediated degradation. Plays an important role in the circadian clock function by phosphorylating BMAL1 at 'Ser-90' which is pivotal for its interaction with CLOCK and which controls CLOCK nuclear entry. Phosphorylates FMR1, promoting FMR1-dependent formation of a membraneless compartment. May phosphorylate histone H2A on 'Ser-1'. The polypeptide is Casein kinase II subunit alpha (Csnk2a1) (Rattus norvegicus (Rat)).